The chain runs to 241 residues: Probable transcriptional regulatory protein H16_A0916 (241 aa).

The protein belongs to the TACO1 family.

It is found in the cytoplasm. The chain is Probable transcriptional regulatory protein H16_A0916 from Cupriavidus necator (strain ATCC 17699 / DSM 428 / KCTC 22496 / NCIMB 10442 / H16 / Stanier 337) (Ralstonia eutropha).